The sequence spans 121 residues: Tachykinin-3 (121 aa).

Residues 1-16 (MRIMLLFTAILAFSLA) form the signal peptide. A propeptide spanning residues 17 to 78 (QSFGAVCKEP…TDPKESTSPE (62 aa)) is cleaved from the precursor. Met90 bears the Methionine amide mark. Residues 93–121 (RSVQPDSPTDVNQENVPSFGILKYPPRAE) are disordered. Positions 94 to 121 (SVQPDSPTDVNQENVPSFGILKYPPRAE) are excised as a propeptide. Residues 96–108 (QPDSPTDVNQENV) show a composition bias toward polar residues.

It belongs to the tachykinin family.

The protein localises to the secreted. Its function is as follows. Tachykinins are active peptides which excite neurons, evoke behavioral responses, are potent vasodilators and secretagogues, and contract (directly or indirectly) many smooth muscles. Is a critical central regulator of gonadal function. The protein is Tachykinin-3 (TAC3) of Homo sapiens (Human).